The primary structure comprises 556 residues: Cytochrome P450 4g1 (556 aa).

Heme-binding residues include E356 and C497.

This sequence belongs to the cytochrome P450 family. Requires heme as cofactor.

The protein resides in the endoplasmic reticulum membrane. Its subcellular location is the microsome membrane. Its function is as follows. May be involved in the metabolism of insect hormones and in the breakdown of synthetic insecticides. This chain is Cytochrome P450 4g1 (Cyp4g1), found in Drosophila melanogaster (Fruit fly).